The primary structure comprises 196 residues: Ribonuclease HII (196 aa).

In terms of domain architecture, RNase H type-2 spans 4-196 (IWVCGVDEAG…PVRRVLEGSF (193 aa)). A divalent metal cation is bound by residues Asp-10, Glu-11, and Asp-106.

Belongs to the RNase HII family. Requires Mn(2+) as cofactor. Mg(2+) is required as a cofactor.

The protein resides in the cytoplasm. It catalyses the reaction Endonucleolytic cleavage to 5'-phosphomonoester.. In terms of biological role, endonuclease that specifically degrades the RNA of RNA-DNA hybrids. The sequence is that of Ribonuclease HII from Polynucleobacter asymbioticus (strain DSM 18221 / CIP 109841 / QLW-P1DMWA-1) (Polynucleobacter necessarius subsp. asymbioticus).